A 368-amino-acid polypeptide reads, in one-letter code: Transaldolase (368 aa).

The active-site Schiff-base intermediate with substrate is Lys140.

It belongs to the transaldolase family. Type 2 subfamily.

The protein resides in the cytoplasm. The enzyme catalyses D-sedoheptulose 7-phosphate + D-glyceraldehyde 3-phosphate = D-erythrose 4-phosphate + beta-D-fructose 6-phosphate. It participates in carbohydrate degradation; pentose phosphate pathway; D-glyceraldehyde 3-phosphate and beta-D-fructose 6-phosphate from D-ribose 5-phosphate and D-xylulose 5-phosphate (non-oxidative stage): step 2/3. In terms of biological role, transaldolase is important for the balance of metabolites in the pentose-phosphate pathway. The chain is Transaldolase from Kocuria rhizophila (strain ATCC 9341 / DSM 348 / NBRC 103217 / DC2201).